A 223-amino-acid polypeptide reads, in one-letter code: Neurotrophic factor BDNF precursor form (223 aa).

A signal peptide spans 1-5; sequence SCMKA. Positions 6–114 are excised as a propeptide; sequence APMKEVSIRG…AANMSMRVRR (109 aa). N-linked (GlcNAc...) asparagine glycosylation is present at asparagine 107. Disulfide bonds link cysteine 127–cysteine 194 and cysteine 172–cysteine 223.

This sequence belongs to the NGF-beta family.

It localises to the secreted. Its function is as follows. Promotes the survival of neuronal populations that are all located either in the central nervous system or directly connected to it. The sequence is that of Neurotrophic factor BDNF precursor form (BDNF) from Lichanura trivirgata (Rosy boa).